Here is a 90-residue protein sequence, read N- to C-terminus: Small ribosomal subunit protein bS16 (90 aa).

This sequence belongs to the bacterial ribosomal protein bS16 family.

The chain is Small ribosomal subunit protein bS16 from Streptococcus pneumoniae (strain Hungary19A-6).